The chain runs to 406 residues: MQAAERDGVAGGLEATAAVAATGGGEASSEPPSPPKAASFDLLDLVRSYRRLELYLEPLRDAAEGVRALLRWQRPLCSLLVCLGLNFLLLTLDQAAWYSVLALLVLLPALLGYLQETYRVRPSERELLRRKYHSVRREDLRRVQLSRQEALAQVKCFLIQLEGFLSGLCYNCEAVYRVLYWENPTVSSQFYGALLGSVCILYLLPLCWVMAILNSTLFLGNSQFYQVIKELKASVEQSLGTKPLESAPEPAKPLPTDAPPDRTPTPTSTEDLTPGSVEEAEEAEPDEEFKDAIEEDDEGSQCSADFDLSLPDNGFMSKNDVIRSKVSRLTERLRKRYPSNNFGTCTGCGATFSVLKKRRSCSNCGNSFCSRCCSFKVPKAVMGATAPEAQRETVFVCAQCNQMLIK.

At 1-71 (MQAAERDGVA…AAEGVRALLR (71 aa)) the chain is on the cytoplasmic side. The tract at residues 1-97 (MQAAERDGVA…LLLTLDQAAW (97 aa)) is sufficient for homooligomerization. Positions 1–210 (MQAAERDGVA…LYLLPLCWVM (210 aa)) are sufficient for localization to endoplasmic reticulum tubular network. A helical membrane pass occupies residues 72–92 (WQRPLCSLLVCLGLNFLLLTL). Position 93 (Asp93) is a topological domain, lumenal. Residues 94-114 (QAAWYSVLALLVLLPALLGYL) traverse the membrane as a helical segment. At 115 to 192 (QETYRVRPSE…NPTVSSQFYG (78 aa)) the chain is on the cytoplasmic side. Positions 193–213 (ALLGSVCILYLLPLCWVMAIL) form an intramembrane region, helical. At 214 to 406 (NSTLFLGNSQ…CAQCNQMLIK (193 aa)) the chain is on the cytoplasmic side. The interval 239 to 295 (LGTKPLESAPEPAKPLPTDAPPDRTPTPTSTEDLTPGSVEEAEEAEPDEEFKDAIEE) is disordered. The span at 250–263 (PAKPLPTDAPPDRT) shows a compositional bias: pro residues. A compositionally biased stretch (acidic residues) spans 278-295 (EEAEEAEPDEEFKDAIEE). Residues 339 to 405 (SNNFGTCTGC…VCAQCNQMLI (67 aa)) form an FYVE-type zinc finger. 8 residues coordinate Zn(2+): Cys345, Cys348, Cys361, Cys364, Cys369, Cys372, Cys397, and Cys400.

In terms of assembly, can form homooligomers (monomers, dimers and tetramers).

The protein resides in the recycling endosome membrane. It is found in the endoplasmic reticulum membrane. The protein localises to the cell projection. Its subcellular location is the growth cone membrane. In terms of biological role, key regulator of RAB11-dependent vesicular trafficking during neurite extension through polarized membrane transport. Promotes axonal elongation and contributes to the establishment of neuronal cell polarity. Involved in nerve growth factor-induced neurite formation in VAPA-dependent manner. Contributes to both the formation and stabilization of the tubular ER network. Involved in ER morphogenesis by regulating the sheet-to-tubule balance and possibly the density of tubule interconnections. The chain is Protrudin (ZFYVE27) from Gallus gallus (Chicken).